Reading from the N-terminus, the 487-residue chain is Aspartyl/glutamyl-tRNA(Asn/Gln) amidotransferase subunit B (487 aa).

It belongs to the GatB/GatE family. GatB subfamily. Heterotrimer of A, B and C subunits.

It catalyses the reaction L-glutamyl-tRNA(Gln) + L-glutamine + ATP + H2O = L-glutaminyl-tRNA(Gln) + L-glutamate + ADP + phosphate + H(+). The enzyme catalyses L-aspartyl-tRNA(Asn) + L-glutamine + ATP + H2O = L-asparaginyl-tRNA(Asn) + L-glutamate + ADP + phosphate + 2 H(+). Allows the formation of correctly charged Asn-tRNA(Asn) or Gln-tRNA(Gln) through the transamidation of misacylated Asp-tRNA(Asn) or Glu-tRNA(Gln) in organisms which lack either or both of asparaginyl-tRNA or glutaminyl-tRNA synthetases. The reaction takes place in the presence of glutamine and ATP through an activated phospho-Asp-tRNA(Asn) or phospho-Glu-tRNA(Gln). This chain is Aspartyl/glutamyl-tRNA(Asn/Gln) amidotransferase subunit B, found in Chlamydia caviae (strain ATCC VR-813 / DSM 19441 / 03DC25 / GPIC) (Chlamydophila caviae).